Here is a 278-residue protein sequence, read N- to C-terminus: Thioredoxin-related transmembrane protein 1 (278 aa).

The N-terminal stretch at 1–26 is a signal peptide; it reads MAHLGRLMVPLAALVLLLWAVPGAHG. Residues 27-132 enclose the Thioredoxin domain; it reads RRNNVRVLTD…FINFVSDKEW (106 aa). Over 27–181 the chain is Extracellular; the sequence is RRNNVRVLTD…DLGIPAWGSY (155 aa). Catalysis depends on nucleophile residues Cys56 and Cys59. Cys56 and Cys59 are joined by a disulfide. The helical transmembrane segment at 182-202 threads the bilayer; it reads LVFAFATVLSGLLLGLCMIFV. The Cytoplasmic portion of the chain corresponds to 203–278; sequence ADCLCPSKRR…VGLPSATDTS (76 aa). Residues Cys205 and Cys207 are each lipidated (S-palmitoyl cysteine). The segment covering 217–226 has biased composition (polar residues); the sequence is QYAKKTSPEF. Positions 217 to 278 are disordered; that stretch reads QYAKKTSPEF…VGLPSATDTS (62 aa). A compositionally biased stretch (acidic residues) spans 235–251; that stretch reads EEQEADEEDVSEEEAED. Ser245 and Ser278 each carry phosphoserine.

Interacts with ATP2A2. In terms of processing, palmitoylated; palmitoylation is required for localization to mitochondria-associated endoplasmic reticulum membrane (MAM).

Its subcellular location is the endoplasmic reticulum membrane. It is found in the mitochondrion membrane. It localises to the secreted. The catalysed reaction is Catalyzes the rearrangement of -S-S- bonds in proteins.. Functionally, thiredoxin domain-containing protein that participates in various redox reactions through the reversible oxidation of its active center dithiol to a disulfide and catalyze dithiol-disulfide exchange reactions. Acts as a key inhibitor of the alternative triglyceride biosynthesis pathway by inhibiting the activity of TMEM68/DIESL at the endoplasmic reticulum, thereby restricting accumulation of triacylglycerol. The alternative triglyceride biosynthesis pathway mediates formation of triacylglycerol from diacylglycerol and membrane phospholipids. Acts as a protein disulfide isomerase by catalyzing formation or reduction of disulfide bonds. Specifically mediates formation of disulfide bonds of transmembrane proteins at the endoplasmic reticulum membrane. Involved in ER-associated degradation (ERAD) via its protein disulfide isomerase activity by acting on folding-defective polypeptides at the endoplasmic reticulum membrane. Acts as a negative regulator of platelet aggregation following secretion in the extracellular space. Acts as a regulator of endoplasmic reticulum-mitochondria contact sites via its ability to regulate redox signals. Regulates endoplasmic reticulum-mitochondria Ca(2+) flux. The chain is Thioredoxin-related transmembrane protein 1 from Mus musculus (Mouse).